The primary structure comprises 283 residues: 4-diphosphocytidyl-2-C-methyl-D-erythritol kinase (283 aa).

Lys-8 is an active-site residue. 90-100 (PIGSGLAGGSS) is an ATP binding site. The active site involves Asp-132.

The protein belongs to the GHMP kinase family. IspE subfamily.

The catalysed reaction is 4-CDP-2-C-methyl-D-erythritol + ATP = 4-CDP-2-C-methyl-D-erythritol 2-phosphate + ADP + H(+). Its pathway is isoprenoid biosynthesis; isopentenyl diphosphate biosynthesis via DXP pathway; isopentenyl diphosphate from 1-deoxy-D-xylulose 5-phosphate: step 3/6. Catalyzes the phosphorylation of the position 2 hydroxy group of 4-diphosphocytidyl-2C-methyl-D-erythritol. This is 4-diphosphocytidyl-2-C-methyl-D-erythritol kinase from Chlamydia muridarum (strain MoPn / Nigg).